The primary structure comprises 131 residues: Small ribosomal subunit protein uS8 (131 aa).

Belongs to the universal ribosomal protein uS8 family. As to quaternary structure, part of the 30S ribosomal subunit. Contacts proteins S5 and S12.

In terms of biological role, one of the primary rRNA binding proteins, it binds directly to 16S rRNA central domain where it helps coordinate assembly of the platform of the 30S subunit. This is Small ribosomal subunit protein uS8 from Legionella pneumophila (strain Paris).